Here is a 274-residue protein sequence, read N- to C-terminus: tRNA-cytidine(32) 2-sulfurtransferase (274 aa).

The short motif at 40–45 (SGGKDS) is the PP-loop motif element. Residues Cys-115, Cys-118, and Cys-206 each contribute to the [4Fe-4S] cluster site.

The protein belongs to the TtcA family. Homodimer. The cofactor is Mg(2+). Requires [4Fe-4S] cluster as cofactor.

It is found in the cytoplasm. It catalyses the reaction cytidine(32) in tRNA + S-sulfanyl-L-cysteinyl-[cysteine desulfurase] + AH2 + ATP = 2-thiocytidine(32) in tRNA + L-cysteinyl-[cysteine desulfurase] + A + AMP + diphosphate + H(+). It participates in tRNA modification. In terms of biological role, catalyzes the ATP-dependent 2-thiolation of cytidine in position 32 of tRNA, to form 2-thiocytidine (s(2)C32). The sulfur atoms are provided by the cysteine/cysteine desulfurase (IscS) system. The sequence is that of tRNA-cytidine(32) 2-sulfurtransferase from Pseudomonas fluorescens (strain SBW25).